The sequence spans 469 residues: Argininosuccinate lyase (469 aa).

Belongs to the lyase 1 family. Argininosuccinate lyase subfamily.

It is found in the cytoplasm. The enzyme catalyses 2-(N(omega)-L-arginino)succinate = fumarate + L-arginine. The protein operates within amino-acid biosynthesis; L-arginine biosynthesis; L-arginine from L-ornithine and carbamoyl phosphate: step 3/3. In Burkholderia thailandensis (strain ATCC 700388 / DSM 13276 / CCUG 48851 / CIP 106301 / E264), this protein is Argininosuccinate lyase.